A 745-amino-acid polypeptide reads, in one-letter code: Kinesin-like protein KIN-14M (745 aa).

A disordered region spans residues 1-31 (MVGEMTNNGRIRPSFPVKDLTSNEGSEYGGP). Positions 1–35 (MVGEMTNNGRIRPSFPVKDLTSNEGSEYGGPVEFT) are globular. Microtubule-binding regions lie at residues 65-77 (YVKR…RWFQ) and 198-745 (SLQL…LSLG). Coiled-coil stretches lie at residues 76-223 (FQEL…GEKE) and 259-389 (KDEL…GNIR). One can recognise a Kinesin motor domain in the interval 387-724 (NIRVFCRVRP…LRFAARVNAC (338 aa)). Residue 472–479 (GQTGSGKT) coordinates ATP.

It belongs to the TRAFAC class myosin-kinesin ATPase superfamily. Kinesin family. KIN-14 subfamily. As to quaternary structure, bind to microtubules in an ATP-insensitive manner (in vitro). Homodimer and heterodimer with KIN14N/KATC (in vitro).

It localises to the cytoplasm. The protein resides in the cytoskeleton. The chain is Kinesin-like protein KIN-14M from Arabidopsis thaliana (Mouse-ear cress).